The primary structure comprises 236 residues: 1-(5-phosphoribosyl)-5-[(5-phosphoribosylamino)methylideneamino] imidazole-4-carboxamide isomerase (236 aa).

The Proton acceptor role is filled by Asp-8. Asp-127 functions as the Proton donor in the catalytic mechanism.

It belongs to the HisA/HisF family.

It localises to the cytoplasm. The enzyme catalyses 1-(5-phospho-beta-D-ribosyl)-5-[(5-phospho-beta-D-ribosylamino)methylideneamino]imidazole-4-carboxamide = 5-[(5-phospho-1-deoxy-D-ribulos-1-ylimino)methylamino]-1-(5-phospho-beta-D-ribosyl)imidazole-4-carboxamide. It participates in amino-acid biosynthesis; L-histidine biosynthesis; L-histidine from 5-phospho-alpha-D-ribose 1-diphosphate: step 4/9. The polypeptide is 1-(5-phosphoribosyl)-5-[(5-phosphoribosylamino)methylideneamino] imidazole-4-carboxamide isomerase (Sulfurimonas denitrificans (strain ATCC 33889 / DSM 1251) (Thiomicrospira denitrificans (strain ATCC 33889 / DSM 1251))).